We begin with the raw amino-acid sequence, 269 residues long: MRYTILSKGDSKSNALKHKMINHMKDFHMVEDAVNPEIVISVGGDGTLLQAFHQYSHMLSQVAFVGVHTGHLGFYADWLPHEVEKLIIEINNSEFQVIEYPLLEIIVRYNDNGYETRYLALNEATMKTENGSTLVVDVGIRGKQFERFRGDGLCISTPSGSTAYNKALGGALIHPSLEAMQIAEIASINNRVFRTVGSPLVLPKHHTCLITPVNHDTILTTIDHVSLKHKNVNGIQFRVANEKVRFARFRPFPFWKRVHDSFIESEDGR.

The active-site Proton acceptor is the Asp-45. NAD(+) is bound by residues 45 to 46 (DG), 122 to 123 (NE), Arg-149, Asp-151, and Ala-186.

Belongs to the NAD kinase family. A divalent metal cation serves as cofactor.

The protein resides in the cytoplasm. The catalysed reaction is NAD(+) + ATP = ADP + NADP(+) + H(+). Functionally, involved in the regulation of the intracellular balance of NAD and NADP, and is a key enzyme in the biosynthesis of NADP. Catalyzes specifically the phosphorylation on 2'-hydroxyl of the adenosine moiety of NAD to yield NADP. This chain is NAD kinase, found in Staphylococcus haemolyticus (strain JCSC1435).